A 491-amino-acid polypeptide reads, in one-letter code: Aspartyl/glutamyl-tRNA(Asn/Gln) amidotransferase subunit B (491 aa).

Belongs to the GatB/GatE family. GatB subfamily. Heterotrimer of A, B and C subunits.

The catalysed reaction is L-glutamyl-tRNA(Gln) + L-glutamine + ATP + H2O = L-glutaminyl-tRNA(Gln) + L-glutamate + ADP + phosphate + H(+). It catalyses the reaction L-aspartyl-tRNA(Asn) + L-glutamine + ATP + H2O = L-asparaginyl-tRNA(Asn) + L-glutamate + ADP + phosphate + 2 H(+). Functionally, allows the formation of correctly charged Asn-tRNA(Asn) or Gln-tRNA(Gln) through the transamidation of misacylated Asp-tRNA(Asn) or Glu-tRNA(Gln) in organisms which lack either or both of asparaginyl-tRNA or glutaminyl-tRNA synthetases. The reaction takes place in the presence of glutamine and ATP through an activated phospho-Asp-tRNA(Asn) or phospho-Glu-tRNA(Gln). In Paraburkholderia xenovorans (strain LB400), this protein is Aspartyl/glutamyl-tRNA(Asn/Gln) amidotransferase subunit B.